The following is a 374-amino-acid chain: Ribosomal RNA large subunit methyltransferase G (374 aa).

This sequence belongs to the methyltransferase superfamily. RlmG family.

The protein localises to the cytoplasm. The enzyme catalyses guanosine(1835) in 23S rRNA + S-adenosyl-L-methionine = N(2)-methylguanosine(1835) in 23S rRNA + S-adenosyl-L-homocysteine + H(+). In terms of biological role, specifically methylates the guanine in position 1835 (m2G1835) of 23S rRNA. This is Ribosomal RNA large subunit methyltransferase G from Pseudomonas putida (strain GB-1).